A 557-amino-acid polypeptide reads, in one-letter code: MCGILAVHHVAEDIEAFKPKALHLSKQLRHRGPDWSGKAIRNQTILCHERLAIVGVESGAQPLVSDDGKLVLTVNGEIYNHLKLRENLKGNYKFKTYSDCEVILYLYREHGPACANMLDGMFSWVLYDQDKDKVVAARDPIGITTLYQGFSSDSPDTAYFASELKALHPVCDKIIAFPPGHYYDSETKQTVRYFKPSWWDENKIPSNPVDYKLLRETLEASVRKRLMAEVPYGVLLSGGLDSSLIASIAARETEKLANSTSQSEEARTITAWPKLHSFAIGLPGSPDLLAARKVADFLHTFHHEHTFTIDEGLDALRDVIYHLETYDVTTIRASTPMYLLSRKIKAQGVKMVLSGEGSDEIFGGYLYFGNAPSREAFHSECVRRVKNLHLSDCLRANKSTMAWGLEARVPFLDKDFLEVALNIDPEEKMYINGRKEKYILRKAFDTTHDSSLQPYLPQDILWRQKEQFSDGVGYSWIDALKDTAELCISDDEFALPRREWGDDIPTTKEAFWYRKLFDEIFPRQCADTVMRWVPKAEWGCPEDPSGRYQAGHVAALK.

Catalysis depends on Cys-2, which acts as the For GATase activity. In terms of domain architecture, Glutamine amidotransferase type-2 spans 2 to 188; it reads CGILAVHHVA…PGHYYDSETK (187 aa). Residues 50–54, 75–77, and Asp-99 contribute to the L-glutamine site; these read RLAIV and NGE. An Asparagine synthetase domain is found at 196–531; that stretch reads PSWWDENKIP…PRQCADTVMR (336 aa). ATP contacts are provided by residues Leu-235, Ile-280, and 354–355; that span reads SG. Residues Ser-391 and Ser-489 each carry the phosphoserine modification.

The protein resides in the cytoplasm. It localises to the nucleus. The enzyme catalyses L-aspartate + L-glutamine + ATP + H2O = L-asparagine + L-glutamate + AMP + diphosphate + H(+). It functions in the pathway amino-acid biosynthesis; L-asparagine biosynthesis; L-asparagine from L-aspartate (L-Gln route): step 1/1. The sequence is that of Probable asparagine synthetase [glutamine-hydrolyzing] (asn1) from Schizosaccharomyces pombe (strain 972 / ATCC 24843) (Fission yeast).